The sequence spans 383 residues: Probable indole-3-pyruvate monooxygenase YUCCA10 (383 aa).

9–14 (GAGPAG) provides a ligand contact to FAD. 177-182 (GGGNSG) is an NADP(+) binding site.

It belongs to the FMO family. The cofactor is FAD.

The catalysed reaction is indole-3-pyruvate + NADPH + O2 + H(+) = (indol-3-yl)acetate + CO2 + NADP(+) + H2O. It participates in plant hormone metabolism; auxin biosynthesis. Functionally, involved in auxin biosynthesis. The polypeptide is Probable indole-3-pyruvate monooxygenase YUCCA10 (YUC10) (Arabidopsis thaliana (Mouse-ear cress)).